We begin with the raw amino-acid sequence, 488 residues long: Microtubule-destabilizing protein 60 (488 aa).

Positions 25-56 (AQEVSRFSENSNPNFVSHSTPLEKSSKSSAQK) are enriched in polar residues. Disordered regions lie at residues 25–71 (AQEV…VFSP), 262–304 (HASV…TKKQ), and 436–457 (DRPFIPKRSNKHPTVPRDPKFN). Positions 264–280 (SVSSSWDNSVSSLNSNG) are enriched in low complexity.

This sequence belongs to the TPX2 family.

It is found in the cytoplasm. Its subcellular location is the cytoskeleton. Functionally, binds directly to microtubules. Microtubule-destabilizing protein involved in the PIF3-dependent positive regulation of hypocotyl cell elongation via the modulation of cortical microtubules dynamic in response to light and ethylene signaling. Promotes submergence-induced and ethylene-dependent underwater hypocotyl elongation. The chain is Microtubule-destabilizing protein 60 from Arabidopsis thaliana (Mouse-ear cress).